The following is a 186-amino-acid chain: MKILAGVDEVGRGSLIGPVYAAAVILNNSIDKKLLKDSKTLTKDKREELEKYIKKNSIWAIGQASTKEIEKINILHASLLAMKRAILKLKIKPSLVLIDGNKLPDLKNYKLEYVIKGDQKIPSISAASIIAKVSRDKFITKLSKEFNNYGWDTNSGYGTKEHLKAIKQFGITKYHRKTFSPISDLL.

Residues 2 to 186 (KILAGVDEVG…KTFSPISDLL (185 aa)) enclose the RNase H type-2 domain. Positions 8, 9, and 99 each coordinate a divalent metal cation.

This sequence belongs to the RNase HII family. Mn(2+) serves as cofactor. Requires Mg(2+) as cofactor.

The protein resides in the cytoplasm. It catalyses the reaction Endonucleolytic cleavage to 5'-phosphomonoester.. Functionally, endonuclease that specifically degrades the RNA of RNA-DNA hybrids. In Pelagibacter ubique (strain HTCC1062), this protein is Ribonuclease HII.